The following is an 80-amino-acid chain: Large ribosomal subunit protein uL29 (80 aa).

It belongs to the universal ribosomal protein uL29 family.

The sequence is that of Large ribosomal subunit protein uL29 from Mycobacterium marinum (strain ATCC BAA-535 / M).